A 254-amino-acid chain; its full sequence is Alcohol dehydrogenase (254 aa).

An NAD(+)-binding site is contributed by F10–L33. S138 serves as a coordination point for substrate. Catalysis depends on Y151, which acts as the Proton acceptor.

It belongs to the short-chain dehydrogenases/reductases (SDR) family. In terms of assembly, homodimer.

It carries out the reaction a primary alcohol + NAD(+) = an aldehyde + NADH + H(+). The enzyme catalyses a secondary alcohol + NAD(+) = a ketone + NADH + H(+). The protein is Alcohol dehydrogenase (Adh1) of Drosophila lacicola (Fruit fly).